Reading from the N-terminus, the 299-residue chain is Probable lipid kinase YegS (299 aa).

The region spanning 2 to 133 is the DAGKc domain; sequence ANFPASLLIL…IDMARVNDKT (132 aa). ATP contacts are provided by residues Thr-40, 66 to 72, and Thr-95; that span reads GDGTINE. Residues Leu-215, Asp-218, and Leu-220 each contribute to the Mg(2+) site. The Proton acceptor role is filled by Glu-271.

Belongs to the diacylglycerol/lipid kinase family. YegS lipid kinase subfamily. Requires Mg(2+) as cofactor. The cofactor is Ca(2+).

It localises to the cytoplasm. In terms of biological role, probably phosphorylates lipids; the in vivo substrate is unknown. This chain is Probable lipid kinase YegS, found in Salmonella paratyphi A (strain ATCC 9150 / SARB42).